The following is a 191-amino-acid chain: Cytochrome b-245 light chain (191 aa).

Over 2–7 (GQIEWA) the chain is Cytoplasmic. Residues 8–30 (MWANEQALASGLILITGGIVATA) form a helical membrane-spanning segment. At 31–35 (GQFTQ) the chain is on the extracellular side. The helical transmembrane segment at 36 to 53 (WYLGAYSIAAGVLVCLLE) threads the bilayer. Residues 54–69 (YPRGKRSKGSTMERCG) lie on the Cytoplasmic side of the membrane. An intramembrane segment occupies 70-80 (QKYLTRVVKLF). The Cytoplasmic segment spans residues 81 to 86 (GPLTRN). Residues 87-104 (YYIRAFLHLGLAVPAGFL) traverse the membrane as a helical segment. Leu-105 is a topological domain (extracellular). The helical transmembrane segment at 106–126 (ATILGTACLAIASGIYLLAAI) threads the bilayer. The Cytoplasmic segment spans residues 127 to 191 (RGEQWSPIEP…NPMPVNDEVV (65 aa)). The interval 134-191 (IEPKPKERPQIGGTIKQPPSNPPPRPPAEARKKLSEEAAGVPTGGPQENPMPVNDEVV) is disordered. Thr-147 carries the post-translational modification Phosphothreonine. Lys-149 is covalently cross-linked (Glycyl lysine isopeptide (Lys-Gly) (interchain with G-Cter in ubiquitin)). Ser-168 carries the phosphoserine modification.

The protein belongs to the p22phox family. Component of the phagocyte NADPH oxidase core complex/cytochrome b558 complex, composed of CYBB (heavy chain (beta)) and CYBA (light chain (alpha)). Component of the phagocyte NADPH oxidase complex composed of an obligatory core heterodimer formed by the membrane proteins CYBA and CYBB and the cytosolic regulatory subunits NCF1/p47-phox, NCF2/p67-phox, NCF4/p40-phox and the small GTPase RAC1 or RAC2. Interacts with NCF1 (via SH3 domain). Interacts with SH3PXD2A. Interacts with DUOX1, DUOX2 and TPO. Interacts with NOX4; this interaction mediates superoxide generation. Interacts with calprotectin (S100A8/9). Interacts with GBP7. Interacts with NOXO1. Forms a heterodimer with NOX3 and is essential for activity and cell membrane localization of NOX3. Interacts with NOX1. Phosphorylation at Thr-147 enhances NADPH oxidase activity by promoting NCF1/p47-phox binding. In terms of processing, ubiquitinated at Lys-149 likely by RNF145.

It localises to the cell membrane. Its function is as follows. Subunit of NADPH oxidase complexes that is required for the NADPH oxidase activity that generates, in various cell types, superoxide from molecular oxygen utilizing NADPH as an electron donor. Subunit of the phagocyte NADPH oxidase complex that mediates the transfer of electrons from cytosolic NADPH to O2 to produce the superoxide anion (O2(-)). In the activated complex, electrons are first transferred from NADPH to flavin adenine dinucleotide (FAD) and subsequently transferred via two heme molecules to molecular oxygen, producing superoxide through an outer-sphere reaction. Activation of the NADPH oxidase complex is initiated by the assembly of cytosolic subunits of the NADPH oxidase complex with the core NADPH oxidase complex to form a complex at the plasma membrane or phagosomal membrane. This activation process is initiated by phosphorylation dependent binding of the cytosolic NCF1/p47-phox subunit to the C-terminus of CYBA/p22-phox. Aassociates with NOX3 to form a functional NADPH oxidase constitutively generating superoxide. The polypeptide is Cytochrome b-245 light chain (Bison bison (American bison)).